Reading from the N-terminus, the 297-residue chain is METTMFKGSITALITPMNDDGSLDFSGFGRFVDWQVTEGSSGVVPVGTTGESPTLTHEEHARIVEYTVQVVAGRIPVIAGAGSNSTAEAVGMARHAKSVGADGVLVVAPYYNKPTQEGLYRHFMTVADATDLPLIIYNIPGRSVVDISVETMARMAQHARIVGVKDATANLLRPLQVRRAIRHKPFTQLSGEDGTVVSFLAAGGEGCISVTSNIAPRLCAELHRAWQDGRVADAMAIQDRLSAVHDALFCESNPGPVKYAASLLGLAGETCRLPLAPLAEDSRMRVREALTGAGLLN.

Threonine 49 provides a ligand contact to pyruvate. Tyrosine 137 serves as the catalytic Proton donor/acceptor. Lysine 165 (schiff-base intermediate with substrate) is an active-site residue. Pyruvate is bound at residue isoleucine 208.

The protein belongs to the DapA family. In terms of assembly, homotetramer; dimer of dimers.

The protein resides in the cytoplasm. It catalyses the reaction L-aspartate 4-semialdehyde + pyruvate = (2S,4S)-4-hydroxy-2,3,4,5-tetrahydrodipicolinate + H2O + H(+). It participates in amino-acid biosynthesis; L-lysine biosynthesis via DAP pathway; (S)-tetrahydrodipicolinate from L-aspartate: step 3/4. Its function is as follows. Catalyzes the condensation of (S)-aspartate-beta-semialdehyde [(S)-ASA] and pyruvate to 4-hydroxy-tetrahydrodipicolinate (HTPA). This chain is 4-hydroxy-tetrahydrodipicolinate synthase, found in Gluconacetobacter diazotrophicus (strain ATCC 49037 / DSM 5601 / CCUG 37298 / CIP 103539 / LMG 7603 / PAl5).